The chain runs to 597 residues: Arginine--tRNA ligase (597 aa).

The 'HIGH' region signature appears at 137 to 147; that stretch reads PNIAKEMHVGH.

This sequence belongs to the class-I aminoacyl-tRNA synthetase family. Monomer.

It localises to the cytoplasm. It catalyses the reaction tRNA(Arg) + L-arginine + ATP = L-arginyl-tRNA(Arg) + AMP + diphosphate. In Parasynechococcus marenigrum (strain WH8102), this protein is Arginine--tRNA ligase.